The primary structure comprises 309 residues: Homoserine kinase (309 aa).

91–101 (PIGSGLGSSAC) contacts ATP.

The protein belongs to the GHMP kinase family. Homoserine kinase subfamily.

The protein localises to the cytoplasm. It catalyses the reaction L-homoserine + ATP = O-phospho-L-homoserine + ADP + H(+). The protein operates within amino-acid biosynthesis; L-threonine biosynthesis; L-threonine from L-aspartate: step 4/5. Functionally, catalyzes the ATP-dependent phosphorylation of L-homoserine to L-homoserine phosphate. The polypeptide is Homoserine kinase (Salmonella dublin (strain CT_02021853)).